The chain runs to 155 residues: 6,7-dimethyl-8-ribityllumazine synthase (155 aa).

5-amino-6-(D-ribitylamino)uracil-binding positions include F23, A57–E59, and A81–I83. S86–T87 lines the (2S)-2-hydroxy-3-oxobutyl phosphate pocket. H89 acts as the Proton donor in catalysis. F114 contributes to the 5-amino-6-(D-ribitylamino)uracil binding site. R128 serves as a coordination point for (2S)-2-hydroxy-3-oxobutyl phosphate.

It belongs to the DMRL synthase family.

It carries out the reaction (2S)-2-hydroxy-3-oxobutyl phosphate + 5-amino-6-(D-ribitylamino)uracil = 6,7-dimethyl-8-(1-D-ribityl)lumazine + phosphate + 2 H2O + H(+). Its pathway is cofactor biosynthesis; riboflavin biosynthesis; riboflavin from 2-hydroxy-3-oxobutyl phosphate and 5-amino-6-(D-ribitylamino)uracil: step 1/2. Its function is as follows. Catalyzes the formation of 6,7-dimethyl-8-ribityllumazine by condensation of 5-amino-6-(D-ribitylamino)uracil with 3,4-dihydroxy-2-butanone 4-phosphate. This is the penultimate step in the biosynthesis of riboflavin. The protein is 6,7-dimethyl-8-ribityllumazine synthase of Geobacter sp. (strain M21).